Here is a 213-residue protein sequence, read N- to C-terminus: ATP phosphoribosyltransferase (213 aa).

This sequence belongs to the ATP phosphoribosyltransferase family. Short subfamily. In terms of assembly, heteromultimer composed of HisG and HisZ subunits.

It is found in the cytoplasm. The catalysed reaction is 1-(5-phospho-beta-D-ribosyl)-ATP + diphosphate = 5-phospho-alpha-D-ribose 1-diphosphate + ATP. It functions in the pathway amino-acid biosynthesis; L-histidine biosynthesis; L-histidine from 5-phospho-alpha-D-ribose 1-diphosphate: step 1/9. Its function is as follows. Catalyzes the condensation of ATP and 5-phosphoribose 1-diphosphate to form N'-(5'-phosphoribosyl)-ATP (PR-ATP). Has a crucial role in the pathway because the rate of histidine biosynthesis seems to be controlled primarily by regulation of HisG enzymatic activity. The chain is ATP phosphoribosyltransferase from Synechococcus sp. (strain RCC307).